Reading from the N-terminus, the 532-residue chain is 2-isopropylmalate synthase (532 aa).

The 263-residue stretch at 5-267 (VIIFDTTLRD…HTNINHQEIY (263 aa)) folds into the Pyruvate carboxyltransferase domain. Residues aspartate 14, histidine 202, histidine 204, and asparagine 238 each contribute to the Mn(2+) site. A regulatory domain region spans residues 392–532 (HLDYFSVQSG…SKQQNSQETV (141 aa)). The disordered stretch occupies residues 513–532 (QQHNNQQQNDSKQQNSQETV).

Belongs to the alpha-IPM synthase/homocitrate synthase family. LeuA type 1 subfamily. As to quaternary structure, homodimer. The cofactor is Mn(2+).

It localises to the cytoplasm. It carries out the reaction 3-methyl-2-oxobutanoate + acetyl-CoA + H2O = (2S)-2-isopropylmalate + CoA + H(+). The protein operates within amino-acid biosynthesis; L-leucine biosynthesis; L-leucine from 3-methyl-2-oxobutanoate: step 1/4. In terms of biological role, catalyzes the condensation of the acetyl group of acetyl-CoA with 3-methyl-2-oxobutanoate (2-ketoisovalerate) to form 3-carboxy-3-hydroxy-4-methylpentanoate (2-isopropylmalate). The polypeptide is 2-isopropylmalate synthase (Pectobacterium atrosepticum (strain SCRI 1043 / ATCC BAA-672) (Erwinia carotovora subsp. atroseptica)).